The following is a 148-amino-acid chain: Snaclec stejaggregin-A subunit beta-3 (148 aa).

The first 23 residues, 1–23, serve as a signal peptide directing secretion; the sequence is MGRFISVSFGLLVVFLSLSGAGA. Cysteine 27 and cysteine 38 are oxidised to a cystine. Positions 34-145 constitute a C-type lectin domain; sequence YDLYCYKVFK…CSRTHYVVCK (112 aa). Residues asparagine 47 and asparagine 78 are each glycosylated (N-linked (GlcNAc...) asparagine). Intrachain disulfides connect cysteine 55-cysteine 144 and cysteine 121-cysteine 136.

It belongs to the snaclec family. As to quaternary structure, heteromultimer; disulfide-linked. In terms of tissue distribution, expressed by the venom gland.

The protein resides in the secreted. Its function is as follows. Interferes with one step of hemostasis (modulation of platelet aggregation, or coagulation cascade, for example). The sequence is that of Snaclec stejaggregin-A subunit beta-3 from Trimeresurus stejnegeri (Chinese green tree viper).